A 124-amino-acid chain; its full sequence is Glycine cleavage system H protein (124 aa).

Residues 19-101 (VATVGITNHA…EGEGWLFKME (83 aa)) form the Lipoyl-binding domain. K60 is subject to N6-lipoyllysine.

The protein belongs to the GcvH family. The glycine cleavage system is composed of four proteins: P, T, L and H. The cofactor is (R)-lipoate.

Functionally, the glycine cleavage system catalyzes the degradation of glycine. The H protein shuttles the methylamine group of glycine from the P protein to the T protein. This Thermotoga maritima (strain ATCC 43589 / DSM 3109 / JCM 10099 / NBRC 100826 / MSB8) protein is Glycine cleavage system H protein.